We begin with the raw amino-acid sequence, 430 residues long: Replication factor C large subunit (430 aa).

An ATP-binding site is contributed by 75–82 (GPPGTGKT).

The protein belongs to the activator 1 small subunits family. RfcL subfamily. As to quaternary structure, heteromultimer composed of small subunits (RfcS) and large subunits (RfcL).

Part of the RFC clamp loader complex which loads the PCNA sliding clamp onto DNA. The polypeptide is Replication factor C large subunit (Nanoarchaeum equitans (strain Kin4-M)).